Reading from the N-terminus, the 473-residue chain is Photosystem II CP43 reaction center protein (473 aa).

A propeptide spanning residues 1–14 (MKTLYSLRRYFHVE) is cleaved from the precursor. T15 carries the post-translational modification N-acetylthreonine. T15 bears the Phosphothreonine mark. 5 consecutive transmembrane segments (helical) span residues 69 to 93 (LFEV…PHLA), 134 to 155 (LIGP…KDKN), 178 to 200 (KAMY…RVIS), 255 to 275 (KPFA…LSYS), and 291 to 312 (WFNN…ASQA). A [CaMn4O5] cluster-binding site is contributed by E367. A helical membrane pass occupies residues 447–471 (RARAAAAGFEKGIDRDTEPVLSMRP).

It belongs to the PsbB/PsbC family. PsbC subfamily. PSII is composed of 1 copy each of membrane proteins PsbA, PsbB, PsbC, PsbD, PsbE, PsbF, PsbH, PsbI, PsbJ, PsbK, PsbL, PsbM, PsbT, PsbX, PsbY, PsbZ, Psb30/Ycf12, at least 3 peripheral proteins of the oxygen-evolving complex and a large number of cofactors. It forms dimeric complexes. Binds multiple chlorophylls and provides some of the ligands for the Ca-4Mn-5O cluster of the oxygen-evolving complex. It may also provide a ligand for a Cl- that is required for oxygen evolution. PSII binds additional chlorophylls, carotenoids and specific lipids. serves as cofactor.

It is found in the plastid. It localises to the chloroplast thylakoid membrane. Functionally, one of the components of the core complex of photosystem II (PSII). It binds chlorophyll and helps catalyze the primary light-induced photochemical processes of PSII. PSII is a light-driven water:plastoquinone oxidoreductase, using light energy to abstract electrons from H(2)O, generating O(2) and a proton gradient subsequently used for ATP formation. In Ostreococcus tauri, this protein is Photosystem II CP43 reaction center protein.